The chain runs to 343 residues: Mediator of RNA polymerase II transcription subunit 2 (343 aa).

2 disordered regions span residues 105 to 141 (KQQQEEEQRRKHQAELEKNKRQQEHDAATKAAAAQQL) and 252 to 277 (STNEASTNNRNNDGTGGASNPRISSN). Residues 107 to 132 (QQEEEQRRKHQAELEKNKRQQEHDAA) are compositionally biased toward basic and acidic residues. Polar residues predominate over residues 252-264 (STNEASTNNRNND).

The protein belongs to the Mediator complex subunit 2 family. Component of the Mediator complex.

The protein resides in the nucleus. Functionally, component of the Mediator complex, a coactivator involved in the regulated transcription of nearly all RNA polymerase II-dependent genes. Mediator functions as a bridge to convey information from gene-specific regulatory proteins to the basal RNA polymerase II transcription machinery. Mediator is recruited to promoters by direct interactions with regulatory proteins and serves as a scaffold for the assembly of a functional preinitiation complex with RNA polymerase II and the general transcription factors. This is Mediator of RNA polymerase II transcription subunit 2 (MED2) from Eremothecium gossypii (strain ATCC 10895 / CBS 109.51 / FGSC 9923 / NRRL Y-1056) (Yeast).